The sequence spans 137 residues: Large-conductance mechanosensitive channel (137 aa).

A run of 2 helical transmembrane segments spans residues 16 to 36 (VIDL…VDSI) and 83 to 103 (GNFI…FLMI).

It belongs to the MscL family. Homopentamer.

Its subcellular location is the cell inner membrane. Functionally, channel that opens in response to stretch forces in the membrane lipid bilayer. May participate in the regulation of osmotic pressure changes within the cell. The polypeptide is Large-conductance mechanosensitive channel (Methylibium petroleiphilum (strain ATCC BAA-1232 / LMG 22953 / PM1)).